Here is a 273-residue protein sequence, read N- to C-terminus: ATP synthase subunit a (273 aa).

7 consecutive transmembrane segments (helical) span residues 41-61 (ILNI…LLIF), 101-121 (LIAP…LMDL), 122-142 (LAVD…ALRV), 143-163 (VPSA…ILII), 183-203 (PFNH…SLLS), 221-241 (LVFI…ISVP), and 247-267 (IIVI…YIAM).

Belongs to the ATPase A chain family. F-type ATPases have 2 components, CF(1) - the catalytic core - and CF(0) - the membrane proton channel. CF(1) has five subunits: alpha(3), beta(3), gamma(1), delta(1), epsilon(1). CF(0) has three main subunits: a(1), b(2) and c(9-12). The alpha and beta chains form an alternating ring which encloses part of the gamma chain. CF(1) is attached to CF(0) by a central stalk formed by the gamma and epsilon chains, while a peripheral stalk is formed by the delta and b chains.

The protein localises to the cell membrane. Key component of the proton channel; it plays a direct role in the translocation of protons across the membrane. This Baumannia cicadellinicola subsp. Homalodisca coagulata protein is ATP synthase subunit a.